The chain runs to 335 residues: tRNA N6-adenosine threonylcarbamoyltransferase (335 aa).

Residues H111 and H115 each coordinate Fe cation. Residues 133 to 137 (LISGG), D166, G179, and N276 each bind substrate. D301 lines the Fe cation pocket.

It belongs to the KAE1 / TsaD family. It depends on Fe(2+) as a cofactor.

It localises to the cytoplasm. It catalyses the reaction L-threonylcarbamoyladenylate + adenosine(37) in tRNA = N(6)-L-threonylcarbamoyladenosine(37) in tRNA + AMP + H(+). Its function is as follows. Required for the formation of a threonylcarbamoyl group on adenosine at position 37 (t(6)A37) in tRNAs that read codons beginning with adenine. Is involved in the transfer of the threonylcarbamoyl moiety of threonylcarbamoyl-AMP (TC-AMP) to the N6 group of A37, together with TsaE and TsaB. TsaD likely plays a direct catalytic role in this reaction. The sequence is that of tRNA N6-adenosine threonylcarbamoyltransferase from Wolbachia sp. subsp. Drosophila simulans (strain wRi).